A 488-amino-acid polypeptide reads, in one-letter code: Prostaglandin E2 receptor EP4 subtype (488 aa).

Over 1-19 (MSIPGVNASFSSTPERLNS) the chain is Extracellular. Residue Asn-7 is glycosylated (N-linked (GlcNAc...) asparagine). The helical transmembrane segment at 20–43 (PVTIPAVMFIFGVVGNLVAIVVLC) threads the bilayer. Topologically, residues 44 to 55 (KSRKEQKETTFY) are cytoplasmic. Residues 56-79 (TLVCGLAVTDLLGTLLVSPVTIAT) traverse the membrane as a helical segment. The Extracellular segment spans residues 80-96 (YMKGQWPGDQALCDYST). Cys-92 and Cys-170 are oxidised to a cystine. A helical membrane pass occupies residues 97–115 (FILLFFGLSGLSIICAMSI). Topologically, residues 116–135 (ERYLAINHAYFYSHYVDKRL) are cytoplasmic. A helical transmembrane segment spans residues 136–160 (AGLTLFAVYASNVLFCALPNMGLGR). The Extracellular segment spans residues 161-184 (SERQYPGTWCFIDWTTNVTAYAAF). A helical transmembrane segment spans residues 185 to 211 (SYMYAGFSSFLILATVLCNVLVCGALL). Residues 212–270 (RMLRQFMRRTSLGTEQHHAAAAAAVASVACRGHAAASPALQRLSDFRRRRSFRRIAGAE) are Cytoplasmic-facing. A helical membrane pass occupies residues 271–298 (IQMVILLIATSLVVLICSIPLVVRVFIN). The Extracellular portion of the chain corresponds to 299–315 (QLYQPSVVKDISRNPDL). The chain crosses the membrane as a helical span at residues 316–335 (QAIRIASVNPILDPWIYILL). Residues 336–488 (RKTVLSKAIE…ETLKLSEKCI (153 aa)) are Cytoplasmic-facing. The disordered stretch occupies residues 358-380 (GRDGSAQHCSESRRTSSAMSGHS). Ser-377, Ser-380, Ser-382, and Ser-385 each carry phosphoserine.

Belongs to the G-protein coupled receptor 1 family. Interacts with FEM1A. Post-translationally, phosphorylation mediates agonist-mediated desensitization by promoting cytoplasmic retention.

The protein resides in the cell membrane. Its function is as follows. Receptor for prostaglandin E2 (PGE2). The activity of this receptor is mediated by G(s) proteins that stimulate adenylate cyclase. Has a relaxing effect on smooth muscle. May play an important role in regulating renal hemodynamics, intestinal epithelial transport, adrenal aldosterone secretion, and uterine function. In Rattus norvegicus (Rat), this protein is Prostaglandin E2 receptor EP4 subtype (Ptger4).